We begin with the raw amino-acid sequence, 601 residues long: Elongation factor 4 (601 aa).

Positions 8–189 (EQIRNFGIIA…LIVRKAPPPK (182 aa)) constitute a tr-type G domain. 20-25 (DHGKST) contributes to the GTP binding site.

It belongs to the TRAFAC class translation factor GTPase superfamily. Classic translation factor GTPase family. LepA subfamily.

It is found in the cell membrane. The enzyme catalyses GTP + H2O = GDP + phosphate + H(+). Functionally, required for accurate and efficient protein synthesis under certain stress conditions. May act as a fidelity factor of the translation reaction, by catalyzing a one-codon backward translocation of tRNAs on improperly translocated ribosomes. Back-translocation proceeds from a post-translocation (POST) complex to a pre-translocation (PRE) complex, thus giving elongation factor G a second chance to translocate the tRNAs correctly. Binds to ribosomes in a GTP-dependent manner. The protein is Elongation factor 4 of Tropheryma whipplei (strain Twist) (Whipple's bacillus).